The following is a 212-amino-acid chain: 3-demethoxyubiquinol 3-hydroxylase (212 aa).

Residues Glu61, Glu91, His94, Glu143, Glu175, and His178 each coordinate Fe cation.

The protein belongs to the COQ7 family. The cofactor is Fe cation.

The protein resides in the cell membrane. The enzyme catalyses a 5-methoxy-2-methyl-3-(all-trans-polyprenyl)benzene-1,4-diol + AH2 + O2 = a 3-demethylubiquinol + A + H2O. It functions in the pathway cofactor biosynthesis; ubiquinone biosynthesis. Its function is as follows. Catalyzes the hydroxylation of 2-nonaprenyl-3-methyl-6-methoxy-1,4-benzoquinol during ubiquinone biosynthesis. The polypeptide is 3-demethoxyubiquinol 3-hydroxylase (Methylibium petroleiphilum (strain ATCC BAA-1232 / LMG 22953 / PM1)).